Here is a 423-residue protein sequence, read N- to C-terminus: ATP-dependent Clp protease ATP-binding subunit ClpX (423 aa).

Positions 1 to 50 (MTDDTEYRCSFCGKEHHQVDDLIAGPDVRICSECVVLSCEIVEDRRNEAL) constitute a ClpX-type ZB domain. The Zn(2+) site is built by Cys9, Cys12, Cys31, and Cys34. Position 126–133 (126–133 (PTGCGKTY)) interacts with ATP.

It belongs to the ClpX chaperone family. In terms of assembly, component of the ClpX-ClpP complex. Forms a hexameric ring that, in the presence of ATP, binds to fourteen ClpP subunits assembled into a disk-like structure with a central cavity, resembling the structure of eukaryotic proteasomes.

ATP-dependent specificity component of the Clp protease. It directs the protease to specific substrates. Can perform chaperone functions in the absence of ClpP. This is ATP-dependent Clp protease ATP-binding subunit ClpX from Tropheryma whipplei (strain TW08/27) (Whipple's bacillus).